Reading from the N-terminus, the 74-residue chain is Large ribosomal subunit protein uL14c (74 aa).

The protein belongs to the universal ribosomal protein uL14 family. As to quaternary structure, part of the 50S ribosomal subunit.

It localises to the plastid. Its subcellular location is the chloroplast. Functionally, binds to 23S rRNA. The sequence is that of Large ribosomal subunit protein uL14c (rpl14) from Oenothera ammophila (Evening primerose).